Consider the following 962-residue polypeptide: Ubiquitin carboxyl-terminal hydrolase 4 (962 aa).

Residues 11–122 (PDVETQKTEL…GQQPIVRKVV (112 aa)) enclose the DUSP domain. The segment at 27–216 (TLQRGAQWYL…LYQGQVLVIE (190 aa)) is necessary for interaction with SART3. The short motif at 133–141 (VEVYLLELK) is the Nuclear export signal element. The 85-residue stretch at 142–226 (LCENSDPTNV…PQNEDGTWPR (85 aa)) folds into the Ubiquitin-like 1 domain. Residues 220 to 249 (EDGTWPRQSLQSKSSTAPSRNFTTSSKPSA) form a disordered region. Residues 225–249 (PRQSLQSKSSTAPSRNFTTSSKPSA) show a composition bias toward polar residues. A required for USP4 activation by providing conformational flexibility between the DUSP and catalytic domains region spans residues 229-295 (LQSKSSTAPS…SYNCQEPPSP (67 aa)). Residues 302–922 (CGLGNLGNTC…AAYVLFYQRR (621 aa)) enclose the USP domain. Cys-311 serves as the catalytic Nucleophile. The regulates ubiquitin dissociation stretch occupies residues 384–386 (PQF). Residues 405–407 (LHE) form a necessary for interaction with RBL2 region. The residue at position 445 (Ser-445) is a Phosphoserine. The segment at 459–463 (LVCPE) is necessary for interaction with RB1 and RBL2. The Zn(2+) site is built by Cys-461 and Cys-464. One can recognise a Ubiquitin-like 2 domain in the interval 483–571 (LKKDRIMEVF…IFVYEVCNTS (89 aa)). An interacts with DUSP and ubiquitin-like 1 domains and is required for USP4 activation region spans residues 485-774 (KDRIMEVFLV…SQPQKKKKAA (290 aa)). Residues 638–699 (EFLSSPLEPG…SESAQKVKGQ (62 aa)) are disordered. Residue Ser-655 is modified to Phosphoserine. A compositionally biased stretch (acidic residues) spans 657 to 666 (EGDEEEEMDH). A phosphoserine mark is found at Ser-675 and Ser-680. Residues 766-771 (QPQKKK) carry the Nuclear localization signal motif. Zn(2+)-binding residues include Cys-798 and Cys-801. The Proton acceptor role is filled by His-880. Positions 928–937 (STSSLGSFPG) are enriched in low complexity. The interval 928-962 (STSSLGSFPGSDGGVKLSSSHQGMGDEEAYNMDTN) is disordered. Residues 952–962 (GDEEAYNMDTN) show a composition bias toward acidic residues.

The protein belongs to the peptidase C19 family. USP4 subfamily. In terms of assembly, interacts with RB1 (both dephosphorylated and hypophosphorylated forms). Interacts with RBL1 and RBL2. Interacts with ADORA2A (via cytoplasmic C-terminus); the interaction is direct. Interacts with SART3; recruits USP4 to its substrate PRPF3. In terms of processing, phosphorylated at Ser-445 by PKB/AKT1 in response to EGF stimulus, promoting its ability deubiquitinate RHEB. Post-translationally, monoubiquitinated by TRIM21. Ubiquitination does not lead to its proteasomal degradation. Autodeubiquitinated. As to expression, expressed in brain, kidney, liver and spleen (at protein level).

The protein localises to the cytoplasm. The protein resides in the nucleus. The enzyme catalyses Thiol-dependent hydrolysis of ester, thioester, amide, peptide and isopeptide bonds formed by the C-terminal Gly of ubiquitin (a 76-residue protein attached to proteins as an intracellular targeting signal).. Its activity is regulated as follows. The completion of the deubiquitinase reaction is mediated by the DUSP and ubiquitin-like 1 domains which promotes the release of ubiquitin from the catalytic site enabling subsequent reactions to occur. In terms of biological role, deubiquitinating enzyme that removes conjugated ubiquitin from target proteins. Deubiquitinates PDPK1. Deubiquitinates TRIM21. Deubiquitinates receptor ADORA2A which increases the amount of functional receptor at the cell surface. Deubiquitinates HAS2. Deubiquitinates RHEB in response to EGF signaling, promoting mTORC1 signaling. May regulate mRNA splicing through deubiquitination of the U4 spliceosomal protein PRPF3. This may prevent its recognition by the U5 component PRPF8 thereby destabilizing interactions within the U4/U6.U5 snRNP. May also play a role in the regulation of quality control in the ER. This is Ubiquitin carboxyl-terminal hydrolase 4 (Usp4) from Mus musculus (Mouse).